Here is an 879-residue protein sequence, read N- to C-terminus: Bifunctional uridylyltransferase/uridylyl-removing enzyme (879 aa).

The uridylyltransferase stretch occupies residues M1–H340. The tract at residues I341–T700 is uridylyl-removing. The HD domain occupies V458 to L580. 2 consecutive ACT domains span residues E701 to R782 and T809 to F879.

It belongs to the GlnD family. It depends on Mg(2+) as a cofactor.

It carries out the reaction [protein-PII]-L-tyrosine + UTP = [protein-PII]-uridylyl-L-tyrosine + diphosphate. The catalysed reaction is [protein-PII]-uridylyl-L-tyrosine + H2O = [protein-PII]-L-tyrosine + UMP + H(+). Its activity is regulated as follows. Uridylyltransferase (UTase) activity is inhibited by glutamine, while glutamine activates uridylyl-removing (UR) activity. Its function is as follows. Modifies, by uridylylation and deuridylylation, the PII regulatory proteins (GlnB and homologs), in response to the nitrogen status of the cell that GlnD senses through the glutamine level. Under low glutamine levels, catalyzes the conversion of the PII proteins and UTP to PII-UMP and PPi, while under higher glutamine levels, GlnD hydrolyzes PII-UMP to PII and UMP (deuridylylation). Thus, controls uridylylation state and activity of the PII proteins, and plays an important role in the regulation of nitrogen assimilation and metabolism. This is Bifunctional uridylyltransferase/uridylyl-removing enzyme from Idiomarina loihiensis (strain ATCC BAA-735 / DSM 15497 / L2-TR).